The chain runs to 249 residues: Leucyl/phenylalanyl-tRNA--protein transferase (249 aa).

The protein belongs to the L/F-transferase family.

Its subcellular location is the cytoplasm. The catalysed reaction is N-terminal L-lysyl-[protein] + L-leucyl-tRNA(Leu) = N-terminal L-leucyl-L-lysyl-[protein] + tRNA(Leu) + H(+). It carries out the reaction N-terminal L-arginyl-[protein] + L-leucyl-tRNA(Leu) = N-terminal L-leucyl-L-arginyl-[protein] + tRNA(Leu) + H(+). The enzyme catalyses L-phenylalanyl-tRNA(Phe) + an N-terminal L-alpha-aminoacyl-[protein] = an N-terminal L-phenylalanyl-L-alpha-aminoacyl-[protein] + tRNA(Phe). Functions in the N-end rule pathway of protein degradation where it conjugates Leu, Phe and, less efficiently, Met from aminoacyl-tRNAs to the N-termini of proteins containing an N-terminal arginine or lysine. The chain is Leucyl/phenylalanyl-tRNA--protein transferase from Cupriavidus metallidurans (strain ATCC 43123 / DSM 2839 / NBRC 102507 / CH34) (Ralstonia metallidurans).